The chain runs to 307 residues: Olfactory receptor 5M3 (307 aa).

Topologically, residues 1–23 (MLNFTDVTEFILLGLTSRREWQV) are extracellular. Asn-3 carries an N-linked (GlcNAc...) asparagine glycan. A helical transmembrane segment spans residues 24–44 (LFFIIFLVVYIITMVGNIGMM). The Cytoplasmic segment spans residues 45-52 (VLIKVSPQ). Residues 53–73 (LNNPMYFFLSHLSFVDVWFSS) traverse the membrane as a helical segment. Residues 74 to 97 (NVTPKMLENLLSDKKTITYAGCLV) lie on the Extracellular side of the membrane. A disulfide bridge connects residues Cys-95 and Cys-187. Residues 98–118 (QCFFFIALVHVEIFILAAMAF) traverse the membrane as a helical segment. The Cytoplasmic segment spans residues 119–137 (DRYMAIGNPLLYGSKMSRV). Residues 138–158 (VCIRLITFPYIYGFLTSLAAT) traverse the membrane as a helical segment. The Extracellular portion of the chain corresponds to 159–194 (LWTYGLYFCGKIEINHFYCADPPLIKMACAGTFVKE). The helical transmembrane segment at 195–215 (YTMIILAGINFTYSLTVIIIS) threads the bilayer. At 216 to 235 (YLFILIAILRMRSAEGRQKA) the chain is on the cytoplasmic side. A helical membrane pass occupies residues 236–256 (FSTCGSHLTAVIIFYGTLIFM). Topologically, residues 257–269 (YLRRPTEESVEQG) are extracellular. The chain crosses the membrane as a helical span at residues 270–290 (KMVAVFYTTVIPMLNPMIYSL). Residues 291-307 (RNKDVKKAMMKVISRSC) are Cytoplasmic-facing.

Belongs to the G-protein coupled receptor 1 family.

Its subcellular location is the cell membrane. Its function is as follows. Odorant receptor. This chain is Olfactory receptor 5M3 (OR5M3), found in Homo sapiens (Human).